A 238-amino-acid polypeptide reads, in one-letter code: Triggering receptor expressed on myeloid cells 1 (238 aa).

An N-terminal signal peptide occupies residues 1 to 20 (MRSARLGRLLWMLFITEIQA). Positions 21–129 (ATELPEEKYI…KDPIILFYPV (109 aa)) constitute an Ig-like V-type domain. Residues 21-210 (ATELPEEKYI…DITRDTEISL (190 aa)) are Extracellular-facing. A disulfide bridge connects residues Cys41 and Cys113. N-linked (GlcNAc...) asparagine glycosylation occurs at Asn135. Residues 141 to 169 (PASAETPTQSCSPTTTLPPTTTTNRHRPR) form a disordered region. A compositionally biased stretch (low complexity) spans 146–163 (TPTQSCSPTTTLPPTTTT). An N-linked (GlcNAc...) asparagine glycan is attached at Asn198. The chain crosses the membrane as a helical span at residues 211-231 (ILPAVCGLLSKSLVFIVLFVV). Residues 232 to 238 (TRMSFTP) are Cytoplasmic-facing.

As to quaternary structure, monomer. Homomultimer; when activated. Interacts with TYROBP/DAP12. Interacts with TLR4.

It is found in the cell membrane. Functionally, cell surface receptor that plays important roles in innate and adaptive immunity by amplifying inflammatory responses. Upon activation by various ligands such as PGLYRP1, HMGB1 or HSP70, multimerizes and forms a complex with transmembrane adapter TYROBP/DAP12. In turn, initiates a SYK-mediated cascade of tyrosine phosphorylation, activating multiple downstream mediators such as BTK, MAPK1, MAPK3 or phospholipase C-gamma. This cascade promotes the neutrophil- and macrophage-mediated release of pro-inflammatory cytokines and/or chemokines, as well as their migration and thereby amplifies inflammatory responses that are triggered by bacterial and fungal infections. By also promoting the amplification of inflammatory signals that are initially triggered by Toll-like receptor (TLR) and NOD-like receptor engagement, plays a major role in the pathophysiology of acute and chronic inflammatory diseases of different etiologies including septic shock and atherosclerosis. The sequence is that of Triggering receptor expressed on myeloid cells 1 (TREM1) from Sus scrofa (Pig).